A 728-amino-acid polypeptide reads, in one-letter code: Probable subtilase-type serine protease DR_A0283 (728 aa).

Residues 1 to 22 form the signal peptide; sequence MPGALPMKKISLAVLSLTTLLA. A propeptide spanning residues 23–148 is cleaved from the precursor; the sequence is ACGQPQTSPQ…RTAQDQLGAQ (126 aa). One can recognise a Peptidase S8 domain in the interval 159–471; the sequence is QYALDSNHLH…YGLIRMDKLA (313 aa). Residues D188, H242, and S412 each act as charge relay system in the active site.

Belongs to the peptidase S8 family.

Its subcellular location is the secreted. The polypeptide is Probable subtilase-type serine protease DR_A0283 (Deinococcus radiodurans (strain ATCC 13939 / DSM 20539 / JCM 16871 / CCUG 27074 / LMG 4051 / NBRC 15346 / NCIMB 9279 / VKM B-1422 / R1)).